Consider the following 877-residue polypeptide: Phosphoenolpyruvate carboxylase (877 aa).

Catalysis depends on residues His-138 and Lys-544.

It belongs to the PEPCase type 1 family. Mg(2+) is required as a cofactor.

It carries out the reaction oxaloacetate + phosphate = phosphoenolpyruvate + hydrogencarbonate. Functionally, forms oxaloacetate, a four-carbon dicarboxylic acid source for the tricarboxylic acid cycle. This is Phosphoenolpyruvate carboxylase from Vibrio vulnificus (strain YJ016).